We begin with the raw amino-acid sequence, 167 residues long: Large ribosomal subunit protein bL9 (167 aa).

It belongs to the bacterial ribosomal protein bL9 family.

Binds to the 23S rRNA. In Chlamydia trachomatis serovar L2 (strain ATCC VR-902B / DSM 19102 / 434/Bu), this protein is Large ribosomal subunit protein bL9.